A 370-amino-acid chain; its full sequence is 3-dehydroquinate synthase (370 aa).

NAD(+)-binding positions include 112 to 116, 136 to 137, K149, K158, and 176 to 179; these read GVIGD, TT, and TLAT. 3 residues coordinate Zn(2+): E191, H254, and H276.

It belongs to the sugar phosphate cyclases superfamily. Dehydroquinate synthase family. It depends on Co(2+) as a cofactor. Zn(2+) serves as cofactor. NAD(+) is required as a cofactor.

It is found in the cytoplasm. It catalyses the reaction 7-phospho-2-dehydro-3-deoxy-D-arabino-heptonate = 3-dehydroquinate + phosphate. It participates in metabolic intermediate biosynthesis; chorismate biosynthesis; chorismate from D-erythrose 4-phosphate and phosphoenolpyruvate: step 2/7. Catalyzes the conversion of 3-deoxy-D-arabino-heptulosonate 7-phosphate (DAHP) to dehydroquinate (DHQ). This is 3-dehydroquinate synthase from Xylella fastidiosa (strain M23).